The following is a 128-amino-acid chain: Transcription antitermination protein NusB (128 aa).

The protein belongs to the NusB family.

Its function is as follows. Involved in transcription antitermination. Required for transcription of ribosomal RNA (rRNA) genes. Binds specifically to the boxA antiterminator sequence of the ribosomal RNA (rrn) operons. In Listeria monocytogenes serotype 4b (strain CLIP80459), this protein is Transcription antitermination protein NusB.